The following is a 155-amino-acid chain: Ferredoxin-6, chloroplastic (155 aa).

The transit peptide at 1-58 directs the protein to the chloroplast; that stretch reads MSTATAPRLPAPRSGASYHYQTTAAPAANTLSFAGHARQAARASGPRLSSRFVASAAA. The 2Fe-2S ferredoxin-type domain occupies 61–152; that stretch reads HKVKLVGPDG…DCVIHTHKEE (92 aa). Residues C98, C103, C106, and C136 each coordinate [2Fe-2S] cluster.

The protein belongs to the 2Fe2S plant-type ferredoxin family. [2Fe-2S] cluster is required as a cofactor.

It localises to the plastid. It is found in the chloroplast. In terms of biological role, ferredoxins are iron-sulfur proteins that transfer electrons in a wide variety of metabolic reactions. This Zea mays (Maize) protein is Ferredoxin-6, chloroplastic (FDX6).